Here is a 1154-residue protein sequence, read N- to C-terminus: Diacylglycerol kinase eta (1154 aa).

The segment at M1–Q54 is disordered. The region spanning T59 to S152 is the PH domain. Phorbol-ester/DAG-type zinc fingers lie at residues M169–C219 and P241–C292. Residues F322 to E457 enclose the DAGKc domain. 3 disordered regions span residues Q560–P608, D634–A678, and F1123–N1154. Residues P573 to L586 are compositionally biased toward acidic residues. Over residues D656 to P667 the composition is skewed to basic and acidic residues. Residues Q1131–N1154 show a composition bias toward polar residues.

Belongs to the eukaryotic diacylglycerol kinase family. Interacts with RAF1 and BRAF. In terms of processing, phosphorylated. Phosphorylation does not inhibit catalytic activity. Expressed in a wide variety of tissues. Most abundant in the brain and testis; also found in lung, spleen, and prostate (at protein level).

It localises to the cytoplasm. Its subcellular location is the cell membrane. It catalyses the reaction a 1,2-diacyl-sn-glycerol + ATP = a 1,2-diacyl-sn-glycero-3-phosphate + ADP + H(+). The catalysed reaction is 1,2-di-(9Z-octadecenoyl)-sn-glycerol + ATP = 1,2-di-(9Z-octadecenoyl)-sn-glycero-3-phosphate + ADP + H(+). It participates in lipid metabolism; glycerolipid metabolism. Functionally, diacylglycerol kinase that converts diacylglycerol/DAG into phosphatidic acid/phosphatidate/PA and regulates the respective levels of these two bioactive lipids. Thereby, acts as a central switch between the signaling pathways activated by these second messengers with different cellular targets and opposite effects in numerous biological processes. Plays a key role in promoting cell growth. Activates the Ras/B-Raf/C-Raf/MEK/ERK signaling pathway induced by EGF. Regulates the recruitment of RAF1 and BRAF from cytoplasm to membranes and their heterodimerization. The protein is Diacylglycerol kinase eta (DGKH) of Mesocricetus auratus (Golden hamster).